A 278-amino-acid chain; its full sequence is Diaminopimelate epimerase (278 aa).

Substrate is bound by residues N13 and N66. C75 acts as the Proton donor in catalysis. Residues 76–77 (GN), N162, N195, and 213–214 (ER) contribute to the substrate site. Residue C222 is the Proton acceptor of the active site. 223 to 224 (GT) contributes to the substrate binding site.

Belongs to the diaminopimelate epimerase family. In terms of assembly, homodimer.

The protein resides in the cytoplasm. It carries out the reaction (2S,6S)-2,6-diaminopimelate = meso-2,6-diaminopimelate. The protein operates within amino-acid biosynthesis; L-lysine biosynthesis via DAP pathway; DL-2,6-diaminopimelate from LL-2,6-diaminopimelate: step 1/1. In terms of biological role, catalyzes the stereoinversion of LL-2,6-diaminopimelate (L,L-DAP) to meso-diaminopimelate (meso-DAP), a precursor of L-lysine and an essential component of the bacterial peptidoglycan. This is Diaminopimelate epimerase from Trichodesmium erythraeum (strain IMS101).